The primary structure comprises 205 residues: Glycerol-3-phosphate acyltransferase (205 aa).

Topologically, residues 1–3 (MSA) are periplasmic. A helical membrane pass occupies residues 4–24 (IAPGMILIAYLCGSISSAILV). The Cytoplasmic portion of the chain corresponds to 25-52 (CRLCGLPDPRTSGSGNPGATNVLRIGGK). Residues 53 to 73 (GAAVAVLIFDVLKGMLPVWGA) form a helical membrane-spanning segment. Residues 74 to 80 (YELGVSP) lie on the Periplasmic side of the membrane. A helical transmembrane segment spans residues 81–101 (FWLGLIAIAACLGHIWPVFFG). At 102 to 111 (FKGGKGVATA) the chain is on the cytoplasmic side. The chain crosses the membrane as a helical span at residues 112–132 (FGAIAPIGWDLTGVMAGTWLL). Topologically, residues 133 to 137 (TVLLS) are periplasmic. Residues 138–158 (GYSSLGAIVSALIAPFYVWWF) traverse the membrane as a helical segment. At 159–205 (KPQFTFPVSMLSCLILLRHHDNIQRLWRRQETKIWTKFKRKREKDPE) the chain is on the cytoplasmic side.

Belongs to the PlsY family. As to quaternary structure, probably interacts with PlsX.

The protein resides in the cell inner membrane. The enzyme catalyses sn-glycerol 3-phosphate + an acyl-CoA = a 1-acyl-sn-glycero-3-phosphate + CoA. The catalysed reaction is a fatty acyl-[ACP] + sn-glycerol 3-phosphate = a 1-acyl-sn-glycero-3-phosphate + holo-[ACP]. The protein operates within lipid metabolism; phospholipid metabolism. Functionally, catalyzes the transfer of an acyl group from acyl-ACP to glycerol-3-phosphate (G3P) to form lysophosphatidic acid (LPA). This enzyme can also utilize acyl-CoA as fatty acyl donor, but not acyl-PO(4). This is Glycerol-3-phosphate acyltransferase from Escherichia coli O8 (strain IAI1).